Consider the following 348-residue polypeptide: D-alanine--D-alanine ligase (348 aa).

The ATP-grasp domain occupies 132–334 (KRVLESIGIP…YPDLIEELVT (203 aa)). An ATP-binding site is contributed by 162-217 (LARLTFPIFVKPANMGSSVGISKAQTKVELRKAIQLALTYDSRVLIEQGVVAREIE). The Mg(2+) site is built by Asp288, Glu301, and Asn303.

Belongs to the D-alanine--D-alanine ligase family. The cofactor is Mg(2+). Mn(2+) is required as a cofactor.

It localises to the cytoplasm. The catalysed reaction is 2 D-alanine + ATP = D-alanyl-D-alanine + ADP + phosphate + H(+). It participates in cell wall biogenesis; peptidoglycan biosynthesis. Its function is as follows. Cell wall formation. This Streptococcus pyogenes serotype M6 (strain ATCC BAA-946 / MGAS10394) protein is D-alanine--D-alanine ligase.